The following is a 97-amino-acid chain: Large ribosomal subunit protein uL23 (97 aa).

This sequence belongs to the universal ribosomal protein uL23 family. As to quaternary structure, part of the 50S ribosomal subunit. Contacts protein L29, and trigger factor when it is bound to the ribosome.

One of the early assembly proteins it binds 23S rRNA. One of the proteins that surrounds the polypeptide exit tunnel on the outside of the ribosome. Forms the main docking site for trigger factor binding to the ribosome. This Anaeromyxobacter dehalogenans (strain 2CP-C) protein is Large ribosomal subunit protein uL23.